A 101-amino-acid chain; its full sequence is Small ribosomal subunit protein uS14 (101 aa).

Belongs to the universal ribosomal protein uS14 family. In terms of assembly, part of the 30S ribosomal subunit. Contacts proteins S3 and S10.

In terms of biological role, binds 16S rRNA, required for the assembly of 30S particles and may also be responsible for determining the conformation of the 16S rRNA at the A site. This chain is Small ribosomal subunit protein uS14, found in Ruegeria sp. (strain TM1040) (Silicibacter sp.).